We begin with the raw amino-acid sequence, 572 residues long: MAFAQSVYNQSSVLKINVMVVDDNRVFLDIWSRMLEKSKYREITVIAVDYPKKALSTLKNQRDNIDLIITDYYMPGMNGLQLKKQITQEFGNLSVLVMSSDPNKEEESLSCGAMGFIPKPIAPTDLPKIYQFALTYKRNGKSTLSTEQNQKDANVSVPQQIMLVPEQAYVLKTKKKNCSSKSDTRTVNSTNVSHVSTNGSRKNRKRKPKGGPSDDGESLSQPPKKKKIWWTNPLQDLFLQAIQHIGYDKVVPKKILAIMNVPYLTRENVASHLQKYRLFVKRVVHQGRFSMLSDRGKDSMFRQTHIKEPYVNYYTPSTSWYETSLNNRSFYSESVHGHSRLLSEAREPVRYNQMSYNYMNRNISFENQPSQNEETRTVFEPPVMANKISQTSQVLGFGQLGPSAISGHNFNTNMMSSYGSLTPNQPGTSHFSYGMQSVLNNENATYNPQPPANATTQPNLDELPQLENLNLYNDLGNTSELPYNISNFQSDDNKKQGEEDGDWTFVNINQDQSNGESSNTIATPETNTPNFNINPNQNQGQAVPEFTDWSFLDQQELVDDDFMNSLFNNDMN.

Residues 17–134 (NVMVVDDNRV…DLPKIYQFAL (118 aa)) form the Response regulatory domain. At aspartate 71 the chain carries 4-aspartylphosphate. The tract at residues 175–225 (KKNCSSKSDTRTVNSTNVSHVSTNGSRKNRKRKPKGGPSDDGESLSQPPKK) is disordered. Positions 179–197 (SSKSDTRTVNSTNVSHVST) are enriched in polar residues. A Nuclear localization signal motif is present at residues 224–227 (KKKK). Positions 227–277 (KIWWTNPLQDLFLQAIQHIGYDKVVPKKILAIMNVPYLTRENVASHLQKYR) form a DNA-binding region, myb-like GARP. Over residues 509 to 522 (NQDQSNGESSNTIA) the composition is skewed to polar residues. The tract at residues 509 to 531 (NQDQSNGESSNTIATPETNTPNF) is disordered.

The protein belongs to the ARR family. Type-B subfamily. As to quaternary structure, binds the target DNA as a monomer. Two-component system major event consists of a His-to-Asp phosphorelay between a sensor histidine kinase (HK) and a response regulator (RR). In plants, the His-to-Asp phosphorelay involves an additional intermediate named Histidine-containing phosphotransfer protein (HPt). This multistep phosphorelay consists of a His-Asp-His-Asp sequential transfer of a phosphate group between first a His and an Asp of the HK protein, followed by the transfer to a conserved His of the HPt protein and finally the transfer to an Asp in the receiver domain of the RR protein.

It localises to the nucleus. Putative transcriptional activator that binds specifically to the DNA sequence 5'-[AG]GATT-3'. Functions as a response regulator involved in His-to-Asp phosphorelay signal transduction system. Phosphorylation of the Asp residue in the receiver domain activates the ability of the protein to promote the transcription of target genes. Could directly activate some type-A response regulators in response to cytokinins. This is Putative two-component response regulator ARR13 (ARR13) from Arabidopsis thaliana (Mouse-ear cress).